The primary structure comprises 250 residues: 2,3-bisphosphoglycerate-dependent phosphoglycerate mutase (250 aa).

Substrate is bound by residues 8-15 (RHGESQWN), 21-22 (TG), Arg60, 87-90 (ERHY), Lys98, 114-115 (RR), and 183-184 (GN). The Tele-phosphohistidine intermediate role is filled by His9. Glu87 (proton donor/acceptor) is an active-site residue.

It belongs to the phosphoglycerate mutase family. BPG-dependent PGAM subfamily. Homodimer.

It catalyses the reaction (2R)-2-phosphoglycerate = (2R)-3-phosphoglycerate. It functions in the pathway carbohydrate degradation; glycolysis; pyruvate from D-glyceraldehyde 3-phosphate: step 3/5. Catalyzes the interconversion of 2-phosphoglycerate and 3-phosphoglycerate. In Bordetella parapertussis (strain 12822 / ATCC BAA-587 / NCTC 13253), this protein is 2,3-bisphosphoglycerate-dependent phosphoglycerate mutase.